Here is a 359-residue protein sequence, read N- to C-terminus: 3-dehydroquinate synthase (359 aa).

NAD(+) is bound by residues 71-76 (DGEQFK), 105-109 (GVIGD), 129-130 (TT), lysine 142, lysine 151, and 169-172 (CLHT). Residues glutamate 184, histidine 247, and histidine 264 each coordinate Zn(2+).

It belongs to the sugar phosphate cyclases superfamily. Dehydroquinate synthase family. It depends on Co(2+) as a cofactor. Zn(2+) serves as cofactor. NAD(+) is required as a cofactor.

The protein localises to the cytoplasm. It catalyses the reaction 7-phospho-2-dehydro-3-deoxy-D-arabino-heptonate = 3-dehydroquinate + phosphate. Its pathway is metabolic intermediate biosynthesis; chorismate biosynthesis; chorismate from D-erythrose 4-phosphate and phosphoenolpyruvate: step 2/7. Functionally, catalyzes the conversion of 3-deoxy-D-arabino-heptulosonate 7-phosphate (DAHP) to dehydroquinate (DHQ). This Shewanella sp. (strain W3-18-1) protein is 3-dehydroquinate synthase.